A 248-amino-acid polypeptide reads, in one-letter code: Tryptophan synthase alpha chain (248 aa).

Residues E36 and D47 each act as proton acceptor in the active site.

It belongs to the TrpA family. In terms of assembly, tetramer of two alpha and two beta chains.

It carries out the reaction (1S,2R)-1-C-(indol-3-yl)glycerol 3-phosphate + L-serine = D-glyceraldehyde 3-phosphate + L-tryptophan + H2O. It functions in the pathway amino-acid biosynthesis; L-tryptophan biosynthesis; L-tryptophan from chorismate: step 5/5. In terms of biological role, the alpha subunit is responsible for the aldol cleavage of indoleglycerol phosphate to indole and glyceraldehyde 3-phosphate. This chain is Tryptophan synthase alpha chain, found in Archaeoglobus fulgidus (strain ATCC 49558 / DSM 4304 / JCM 9628 / NBRC 100126 / VC-16).